Consider the following 938-residue polypeptide: Breast cancer type 2 susceptibility protein homolog (938 aa).

Composition is skewed to basic and acidic residues over residues 320 to 339 (LEPS…ESKI) and 409 to 425 (NSIK…ETPN). 2 disordered regions span residues 320-359 (LEPS…TTVL) and 409-434 (NSIK…SSHQ). 3 BRCA2 repeats span residues 537–571 (AEPE…EFQY), 638–672 (NEPQ…QSRA), and 713–747 (SETE…EFQA). Residues 870 to 879 (SSTETSTSCA) show a composition bias toward polar residues. The disordered stretch occupies residues 870 to 938 (SSTETSTSCA…RRLGLSRSRY (69 aa)). The span at 898 to 915 (ADRDLNRSKDCAKNRQDA) shows a compositional bias: basic and acidic residues. Residues 926–938 (KKSRRLGLSRSRY) show a composition bias toward basic residues.

In terms of assembly, interacts with Rad9 and spn-A/Rad51.

It localises to the nucleus. Involved in and required for double-strand break repair by meiotic and mitotic homologous recombination. During meiosis, has a dual role in the repair of meiotic double-stranded breaks and the efficient activation of the meiotic recombination checkpoint. This is Breast cancer type 2 susceptibility protein homolog from Drosophila sechellia (Fruit fly).